A 166-amino-acid chain; its full sequence is Phospholipase A2 inhibitor CgMIP-II (166 aa).

A signal peptide spans 1–19; the sequence is MRLILLSGLLLLGTFLANG. In terms of domain architecture, C-type lectin spans 46–161; that stretch reads LRYALMTVHN…CDDNLLVVCE (116 aa). 2 disulfide bridges follow: C83–C160 and C138–C152. N-linked (GlcNAc...) asparagine glycosylation is present at N122.

It belongs to the alpha-type phospholipase A2 inhibitor family. In terms of assembly, homomer composed of 20-25-kDa subunits that form oligomers of 180 kDa. N-glycosylated. The glycosidic chain may contain superficial sialic acid residues. As to expression, expressed by the liver.

Its subcellular location is the secreted. In terms of biological role, selectively inhibits the toxic properties of myotoxin-II from the same venom (AC P81165). Does not inhibit PLA2, anti-coagulant and lethal activities of the basic myotoxin I from the same venom (AC P0DQP6), nor the different crotoxin forms (heterodimer or subunit B alone). Does not block the enzymatic activity of crude acidic PLA2 fractions from the same venom. This chain is Phospholipase A2 inhibitor CgMIP-II, found in Cerrophidion godmani (Porthidium godmani).